A 328-amino-acid polypeptide reads, in one-letter code: Phosphatidylglycerol--prolipoprotein diacylglyceryl transferase (328 aa).

Transmembrane regions (helical) follow at residues 15-35 (VIQGIPITWYSLSYIFIILIS), 58-78 (FMFSLVLGAILGGRLASTLVY), and 106-126 (GMAIHGGFLGAIIAPLIIINT). An a 1,2-diacyl-sn-glycero-3-phospho-(1'-sn-glycerol)-binding site is contributed by Arg-156. Transmembrane regions (helical) follow at residues 242 to 262 (GFIFGIYVMLYAFFRFFIEYL) and 289 to 309 (ISMGQILSLVLMFSGLIWVVV).

Belongs to the Lgt family.

It localises to the cell inner membrane. The catalysed reaction is L-cysteinyl-[prolipoprotein] + a 1,2-diacyl-sn-glycero-3-phospho-(1'-sn-glycerol) = an S-1,2-diacyl-sn-glyceryl-L-cysteinyl-[prolipoprotein] + sn-glycerol 1-phosphate + H(+). Its pathway is protein modification; lipoprotein biosynthesis (diacylglyceryl transfer). Functionally, catalyzes the transfer of the diacylglyceryl group from phosphatidylglycerol to the sulfhydryl group of the N-terminal cysteine of a prolipoprotein, the first step in the formation of mature lipoproteins. The sequence is that of Phosphatidylglycerol--prolipoprotein diacylglyceryl transferase from Borrelia garinii subsp. bavariensis (strain ATCC BAA-2496 / DSM 23469 / PBi) (Borreliella bavariensis).